The primary structure comprises 235 residues: Thiamine-phosphate synthase (235 aa).

Residues 50–54 (QLRDK) and Asn-91 each bind 4-amino-2-methyl-5-(diphosphooxymethyl)pyrimidine. Positions 92 and 111 each coordinate Mg(2+). Residue Ser-130 participates in 4-amino-2-methyl-5-(diphosphooxymethyl)pyrimidine binding. 160–162 (TPT) contacts 2-[(2R,5Z)-2-carboxy-4-methylthiazol-5(2H)-ylidene]ethyl phosphate. Lys-163 lines the 4-amino-2-methyl-5-(diphosphooxymethyl)pyrimidine pocket. Residue Gly-191 participates in 2-[(2R,5Z)-2-carboxy-4-methylthiazol-5(2H)-ylidene]ethyl phosphate binding.

The protein belongs to the thiamine-phosphate synthase family. The cofactor is Mg(2+).

The catalysed reaction is 2-[(2R,5Z)-2-carboxy-4-methylthiazol-5(2H)-ylidene]ethyl phosphate + 4-amino-2-methyl-5-(diphosphooxymethyl)pyrimidine + 2 H(+) = thiamine phosphate + CO2 + diphosphate. It catalyses the reaction 2-(2-carboxy-4-methylthiazol-5-yl)ethyl phosphate + 4-amino-2-methyl-5-(diphosphooxymethyl)pyrimidine + 2 H(+) = thiamine phosphate + CO2 + diphosphate. It carries out the reaction 4-methyl-5-(2-phosphooxyethyl)-thiazole + 4-amino-2-methyl-5-(diphosphooxymethyl)pyrimidine + H(+) = thiamine phosphate + diphosphate. The protein operates within cofactor biosynthesis; thiamine diphosphate biosynthesis; thiamine phosphate from 4-amino-2-methyl-5-diphosphomethylpyrimidine and 4-methyl-5-(2-phosphoethyl)-thiazole: step 1/1. Functionally, condenses 4-methyl-5-(beta-hydroxyethyl)thiazole monophosphate (THZ-P) and 2-methyl-4-amino-5-hydroxymethyl pyrimidine pyrophosphate (HMP-PP) to form thiamine monophosphate (TMP). This is Thiamine-phosphate synthase from Mycobacterium leprae (strain TN).